Consider the following 309-residue polypeptide: Glutaminase (309 aa).

Residues Ser64, Asn114, Glu160, Asn167, Tyr191, Tyr243, and Val261 each contribute to the substrate site.

Belongs to the glutaminase family. Homotetramer.

It catalyses the reaction L-glutamine + H2O = L-glutamate + NH4(+). This Rhizobium rhizogenes (strain K84 / ATCC BAA-868) (Agrobacterium radiobacter) protein is Glutaminase.